The primary structure comprises 506 residues: Lysine--tRNA ligase (506 aa).

Residues Glu411 and Glu418 each contribute to the Mg(2+) site.

This sequence belongs to the class-II aminoacyl-tRNA synthetase family. As to quaternary structure, homodimer. Mg(2+) is required as a cofactor.

It localises to the cytoplasm. It catalyses the reaction tRNA(Lys) + L-lysine + ATP = L-lysyl-tRNA(Lys) + AMP + diphosphate. This is Lysine--tRNA ligase from Thermosynechococcus vestitus (strain NIES-2133 / IAM M-273 / BP-1).